A 356-amino-acid polypeptide reads, in one-letter code: 3-dehydroquinate synthase (356 aa).

NAD(+) is bound by residues 106–110 (GVVGD), 130–131 (TT), K143, and K152. Residues E185, H248, and H265 each contribute to the Zn(2+) site.

This sequence belongs to the sugar phosphate cyclases superfamily. Dehydroquinate synthase family. The cofactor is NAD(+). Co(2+) serves as cofactor. Requires Zn(2+) as cofactor.

The protein resides in the cytoplasm. The catalysed reaction is 7-phospho-2-dehydro-3-deoxy-D-arabino-heptonate = 3-dehydroquinate + phosphate. The protein operates within metabolic intermediate biosynthesis; chorismate biosynthesis; chorismate from D-erythrose 4-phosphate and phosphoenolpyruvate: step 2/7. Catalyzes the conversion of 3-deoxy-D-arabino-heptulosonate 7-phosphate (DAHP) to dehydroquinate (DHQ). This chain is 3-dehydroquinate synthase, found in Caldanaerobacter subterraneus subsp. tengcongensis (strain DSM 15242 / JCM 11007 / NBRC 100824 / MB4) (Thermoanaerobacter tengcongensis).